Consider the following 101-residue polypeptide: Small ribosomal subunit protein uS14A (101 aa).

A disordered region spans residues 31 to 74 (IRKPSTPEADRAAAQAALQRLPRDASPVRLRNRDAADGRPRGHL). Over residues 61 to 70 (RNRDAADGRP) the composition is skewed to basic and acidic residues.

This sequence belongs to the universal ribosomal protein uS14 family. In terms of assembly, part of the 30S ribosomal subunit. Contacts proteins S3 and S10.

Its function is as follows. Binds 16S rRNA, required for the assembly of 30S particles and may also be responsible for determining the conformation of the 16S rRNA at the A site. This Nocardia farcinica (strain IFM 10152) protein is Small ribosomal subunit protein uS14A.